Reading from the N-terminus, the 266-residue chain is Imidazole glycerol phosphate synthase subunit HisF (266 aa).

Catalysis depends on residues aspartate 11 and aspartate 130.

The protein belongs to the HisA/HisF family. As to quaternary structure, heterodimer of HisH and HisF.

Its subcellular location is the cytoplasm. The catalysed reaction is 5-[(5-phospho-1-deoxy-D-ribulos-1-ylimino)methylamino]-1-(5-phospho-beta-D-ribosyl)imidazole-4-carboxamide + L-glutamine = D-erythro-1-(imidazol-4-yl)glycerol 3-phosphate + 5-amino-1-(5-phospho-beta-D-ribosyl)imidazole-4-carboxamide + L-glutamate + H(+). The protein operates within amino-acid biosynthesis; L-histidine biosynthesis; L-histidine from 5-phospho-alpha-D-ribose 1-diphosphate: step 5/9. In terms of biological role, IGPS catalyzes the conversion of PRFAR and glutamine to IGP, AICAR and glutamate. The HisF subunit catalyzes the cyclization activity that produces IGP and AICAR from PRFAR using the ammonia provided by the HisH subunit. This chain is Imidazole glycerol phosphate synthase subunit HisF, found in Verminephrobacter eiseniae (strain EF01-2).